The primary structure comprises 62 residues: Protein DsrB (62 aa).

This sequence belongs to the DsrB family.

The chain is Protein DsrB from Escherichia fergusonii (strain ATCC 35469 / DSM 13698 / CCUG 18766 / IAM 14443 / JCM 21226 / LMG 7866 / NBRC 102419 / NCTC 12128 / CDC 0568-73).